The sequence spans 503 residues: Probable protein kinase UbiB (503 aa).

Residues 13–35 traverse the membrane as a helical segment; it reads TFYRYRLAGLCASLMGSGWICAL. In terms of domain architecture, Protein kinase spans 120–491; it reads EFETEPIASA…QQRQSLWLAV (372 aa). ATP contacts are provided by residues 126-134 and Lys-148; that span reads IASASIAQV. The active-site Proton acceptor is Asp-283. Residues 485-502 form a helical membrane-spanning segment; that stretch reads QSLWLAVIAVVLLLILLL.

The protein belongs to the ABC1 family. UbiB subfamily.

The protein localises to the cell inner membrane. Its pathway is cofactor biosynthesis; ubiquinone biosynthesis [regulation]. In terms of biological role, is probably a protein kinase regulator of UbiI activity which is involved in aerobic coenzyme Q (ubiquinone) biosynthesis. The sequence is that of Probable protein kinase UbiB from Neisseria meningitidis serogroup B (strain ATCC BAA-335 / MC58).